Consider the following 550-residue polypeptide: Luciferin 4-monooxygenase (550 aa).

A Microbody targeting signal motif is present at residues 548–550 (SKL).

The protein belongs to the ATP-dependent AMP-binding enzyme family. Mg(2+) serves as cofactor.

It localises to the peroxisome. It carries out the reaction firefly D-luciferin + ATP + O2 = firefly oxyluciferin + hnu + AMP + CO2 + diphosphate. In terms of biological role, produces green light with a wavelength of 562 nm. In Photinus pyralis (Common eastern firefly), this protein is Luciferin 4-monooxygenase.